A 93-amino-acid polypeptide reads, in one-letter code: Small ribosomal subunit protein uS19 (93 aa).

Belongs to the universal ribosomal protein uS19 family.

Protein S19 forms a complex with S13 that binds strongly to the 16S ribosomal RNA. The sequence is that of Small ribosomal subunit protein uS19 from Pseudarthrobacter chlorophenolicus (strain ATCC 700700 / DSM 12829 / CIP 107037 / JCM 12360 / KCTC 9906 / NCIMB 13794 / A6) (Arthrobacter chlorophenolicus).